The primary structure comprises 844 residues: RING finger containing E3 ubiquitin-protein ligase WSV222 (844 aa).

229–236 (AEDDKGKT) lines the ATP pocket. The segment at 308-359 (CGVCATSVEEDENEGKTTSLSWYQMNCKHYIHCECLMGMCAAAGNVQCPMCR) adopts an RING-type; atypical zinc-finger fold.

In terms of assembly, interacts with host UBE2E1/UBCH6; this interaction results in WSV222 auto-ubiquitination. Interacts with host tumor suppressor-like protein.

The enzyme catalyses S-ubiquitinyl-[E2 ubiquitin-conjugating enzyme]-L-cysteine + [acceptor protein]-L-lysine = [E2 ubiquitin-conjugating enzyme]-L-cysteine + N(6)-ubiquitinyl-[acceptor protein]-L-lysine.. It functions in the pathway protein modification; protein ubiquitination. Its function is as follows. Probable E3 ubiquitin-protein ligase which accepts ubiquitin from the E2 ubiquitin-conjugating enzyme UBE2E1/UBCH6 in the form of a thioester and then directly transfers the ubiquitin to targeted substrates. Mediates ubiquitination of host tumor-suppressor-like protein (TSL) targeting it for degradation. Might function as an anti-apoptosis protein by counteracting TSL-induced apoptosis. This chain is RING finger containing E3 ubiquitin-protein ligase WSV222, found in White spot syndrome virus (isolate Shrimp/China/Tongan/1996) (WSSV).